Consider the following 457-residue polypeptide: Oxygen-independent coproporphyrinogen III oxidase (457 aa).

Residues 47–279 (LKNPMPLSLY…EILESLISFL (233 aa)) form the Radical SAM core domain. Tyr-56 contributes to the S-adenosyl-L-methionine binding site. 2 residues coordinate [4Fe-4S] cluster: Cys-62 and Cys-66. Phe-68 contributes to the S-adenosyl-L-methionine binding site. Cys-69 lines the [4Fe-4S] cluster pocket. S-adenosyl-L-methionine contacts are provided by residues Gly-113, 114–115 (GT), Glu-147, Gln-174, Arg-186, Asp-211, Ala-245, and Ile-331.

Belongs to the anaerobic coproporphyrinogen-III oxidase family. Monomer. The cofactor is [4Fe-4S] cluster.

It is found in the cytoplasm. It catalyses the reaction coproporphyrinogen III + 2 S-adenosyl-L-methionine = protoporphyrinogen IX + 2 5'-deoxyadenosine + 2 L-methionine + 2 CO2. The protein operates within porphyrin-containing compound metabolism; protoporphyrin-IX biosynthesis; protoporphyrinogen-IX from coproporphyrinogen-III (AdoMet route): step 1/1. Its function is as follows. Involved in the heme biosynthesis. Catalyzes the anaerobic oxidative decarboxylation of propionate groups of rings A and B of coproporphyrinogen III to yield the vinyl groups in protoporphyrinogen IX. This Helicobacter pylori (strain ATCC 700392 / 26695) (Campylobacter pylori) protein is Oxygen-independent coproporphyrinogen III oxidase (hemN).